We begin with the raw amino-acid sequence, 129 residues long: Small ribosomal subunit protein uS9 (129 aa).

This sequence belongs to the universal ribosomal protein uS9 family.

The protein is Small ribosomal subunit protein uS9 of Helicobacter pylori (strain P12).